Here is a 177-residue protein sequence, read N- to C-terminus: Endoribonuclease YbeY (177 aa).

Residues His118, His122, and His128 each coordinate Zn(2+).

This sequence belongs to the endoribonuclease YbeY family. Zn(2+) serves as cofactor.

Its subcellular location is the cytoplasm. Functionally, single strand-specific metallo-endoribonuclease involved in late-stage 70S ribosome quality control and in maturation of the 3' terminus of the 16S rRNA. This chain is Endoribonuclease YbeY, found in Mycolicibacterium paratuberculosis (strain ATCC BAA-968 / K-10) (Mycobacterium paratuberculosis).